A 126-amino-acid chain; its full sequence is Fluoride-specific ion channel FluC (126 aa).

Transmembrane regions (helical) follow at residues 1 to 21, 40 to 60, 72 to 92, and 104 to 124; these read MIVI…FGLD, LATL…GGFA, AISI…VATV, and MVNI…GLSL. The Na(+) site is built by Gly-79 and Thr-82.

It belongs to the fluoride channel Fluc/FEX (TC 1.A.43) family.

It is found in the cell membrane. The catalysed reaction is fluoride(in) = fluoride(out). Na(+) is not transported, but it plays an essential structural role and its presence is essential for fluoride channel function. Functionally, fluoride-specific ion channel. Important for reducing fluoride concentration in the cell, thus reducing its toxicity. The polypeptide is Fluoride-specific ion channel FluC (Renibacterium salmoninarum (strain ATCC 33209 / DSM 20767 / JCM 11484 / NBRC 15589 / NCIMB 2235)).